Reading from the N-terminus, the 296-residue chain is Phosphatidylglycerol--prolipoprotein diacylglyceryl transferase (296 aa).

4 helical membrane passes run 10-30 (IAFS…LAAF), 57-77 (LLFY…MLFY), 92-112 (VWEG…ACWL), and 119-139 (LHFF…LGFG). Arg-140 is an a 1,2-diacyl-sn-glycero-3-phospho-(1'-sn-glycerol) binding site. 3 consecutive transmembrane segments (helical) span residues 194–214 (QLYE…TFSM), 220–240 (YAVS…VEFV), and 254–274 (WLTM…VLLA).

The protein belongs to the Lgt family.

Its subcellular location is the cell inner membrane. It carries out the reaction L-cysteinyl-[prolipoprotein] + a 1,2-diacyl-sn-glycero-3-phospho-(1'-sn-glycerol) = an S-1,2-diacyl-sn-glyceryl-L-cysteinyl-[prolipoprotein] + sn-glycerol 1-phosphate + H(+). It participates in protein modification; lipoprotein biosynthesis (diacylglyceryl transfer). In terms of biological role, catalyzes the transfer of the diacylglyceryl group from phosphatidylglycerol to the sulfhydryl group of the N-terminal cysteine of a prolipoprotein, the first step in the formation of mature lipoproteins. The sequence is that of Phosphatidylglycerol--prolipoprotein diacylglyceryl transferase from Xanthomonas axonopodis pv. citri (strain 306).